The following is a 482-amino-acid chain: Complement C1r subcomponent-like protein (482 aa).

The signal sequence occupies residues 1 to 43 (MSGFRGLVPELENSLWSSPTTSCMSKMCWWLLWGILHTCPTQA). The region spanning 44 to 166 (SVLLAQQSPQ…KGFLALYQAV (123 aa)) is the CUB domain. 2 disulfides stabilise this stretch: C97–C115 and C190–C223. The Sushi domain occupies 166-225 (VAVNQPNGDTEAVTTPGAPKIQNHCQDPYYKADQTGTLSCPSSWKWKDRQDGGEVPECVP). In terms of domain architecture, Peptidase S1 spans 240 to 479 (TFGSSRAKLG…YMDWIKRVIE (240 aa)). Active-site charge relay system residues include H278 and D334. N-linked (GlcNAc...) asparagine glycosylation occurs at N358. 2 disulfide bridges follow: C397-C416 and C427-C457. The active-site Charge relay system is the S431.

The protein belongs to the peptidase S1 family. Expressed in liver (at protein level).

It is found in the secreted. Mediates the proteolytic cleavage of HP/haptoglobin in the endoplasmic reticulum. The protein is Complement C1r subcomponent-like protein (C1rl) of Mus musculus (Mouse).